The chain runs to 263 residues: Trans-2-decenoyl-[acyl-carrier-protein] isomerase (263 aa).

Belongs to the enoyl-CoA hydratase/isomerase family. In terms of assembly, homotetramer.

The enzyme catalyses (2E)-decenoyl-[ACP] = (3Z)-decenoyl-[ACP]. It functions in the pathway lipid metabolism; fatty acid biosynthesis. Functionally, catalyzes the isomerization of trans-2-decenoyl-ACP to cis-3-decenoyl-ACP. Required for survival at low pH. In Streptococcus mutans serotype c (strain ATCC 700610 / UA159), this protein is Trans-2-decenoyl-[acyl-carrier-protein] isomerase (fabM).